A 368-amino-acid polypeptide reads, in one-letter code: Phospho-N-acetylmuramoyl-pentapeptide-transferase (368 aa).

Helical transmembrane passes span 23–43 (YLTF…IFAG), 72–92 (VPTM…FLWA), 98–118 (HVWL…IDDY), 139–159 (VTLG…SVLL), 170–190 (LSVD…TAVS), 201–221 (GLAA…AYLC), 238–258 (AGEV…FLWF), 281–301 (VIAL…VFFV), and 345–365 (KIVI…LMTL).

Belongs to the glycosyltransferase 4 family. MraY subfamily. It depends on Mg(2+) as a cofactor.

Its subcellular location is the cell inner membrane. It carries out the reaction UDP-N-acetyl-alpha-D-muramoyl-L-alanyl-gamma-D-glutamyl-meso-2,6-diaminopimeloyl-D-alanyl-D-alanine + di-trans,octa-cis-undecaprenyl phosphate = di-trans,octa-cis-undecaprenyl diphospho-N-acetyl-alpha-D-muramoyl-L-alanyl-D-glutamyl-meso-2,6-diaminopimeloyl-D-alanyl-D-alanine + UMP. It functions in the pathway cell wall biogenesis; peptidoglycan biosynthesis. Its function is as follows. Catalyzes the initial step of the lipid cycle reactions in the biosynthesis of the cell wall peptidoglycan: transfers peptidoglycan precursor phospho-MurNAc-pentapeptide from UDP-MurNAc-pentapeptide onto the lipid carrier undecaprenyl phosphate, yielding undecaprenyl-pyrophosphoryl-MurNAc-pentapeptide, known as lipid I. The protein is Phospho-N-acetylmuramoyl-pentapeptide-transferase of Chlorobaculum tepidum (strain ATCC 49652 / DSM 12025 / NBRC 103806 / TLS) (Chlorobium tepidum).